A 211-amino-acid chain; its full sequence is Peptidyl-prolyl cis-trans isomerase FKBP14 (211 aa).

The N-terminal stretch at 1–19 (MRLFLWNAVLTLFVTSLIG) is a signal peptide. Cys38 and Cys96 are oxidised to a cystine. The PPIase FKBP-type domain occupies 45–135 (GDLMLVHYEG…IFNIDLLEIR (91 aa)). The EF-hand 1 domain occupies 135 to 170 (RNGPRSHESFQEMDLNDDWKLSKDEVKAYLKKEFEK). Asp148, Asn150, Asp152, Lys154, and Glu159 together coordinate Ca(2+). Residue Asn176 is glycosylated (N-linked (GlcNAc...) asparagine). In terms of domain architecture, EF-hand 2 spans 179–211 (HHDALVEDIFDKEDEDKDGFISAREFTYKHDEL). Residues Asp192, Asp194, Asp196, Phe198, and Glu203 each coordinate Ca(2+). Residues 208–211 (HDEL) carry the Prevents secretion from ER motif.

Monomer. Homodimer. Interacts with type III, type IV and type X collagens.

The protein resides in the endoplasmic reticulum lumen. It catalyses the reaction [protein]-peptidylproline (omega=180) = [protein]-peptidylproline (omega=0). Inhibited by tacrolimus/FK506. PPIase which accelerates the folding of proteins during protein synthesis. Has a preference for substrates containing 4-hydroxylproline modifications, including type III collagen. May also target type VI and type X collagens. The sequence is that of Peptidyl-prolyl cis-trans isomerase FKBP14 (FKBP14) from Homo sapiens (Human).